We begin with the raw amino-acid sequence, 991 residues long: Translation initiation factor IF-2 (991 aa).

Disordered stretches follow at residues 58–82 (EGKK…GRSR) and 106–405 (QARA…PAPQ). Residues 106-164 (QARADAAASDAAPAEPAPAAAEPSASAPVTAPVNAPAADAPQAPATAAPDTAAPAAETP) show a composition bias toward low complexity. The span at 165–175 (SQPPAVEPQPA) shows a compositional bias: pro residues. 3 stretches are compositionally biased toward low complexity: residues 190–206 (AKPA…AAVE), 221–258 (AVQA…ASKP), and 267–276 (APVPVAAPAV). Positions 279 to 289 (AGREEARRAAE) are enriched in basic and acidic residues. Residues 379-388 (RAGGKGGKGG) show a composition bias toward gly residues. Positions 395-405 (QAERRHEPAPQ) are enriched in basic and acidic residues. Residues 492 to 659 (PRAPVVTVMG…NVLLQAEILE (168 aa)) form the tr-type G domain. Positions 501–508 (GHVDHGKT) are G1. 501–508 (GHVDHGKT) is a GTP binding site. The segment at 526 to 530 (GITQH) is G2. A G3 region spans residues 547-550 (DTPG). Residues 547-551 (DTPGH) and 601-604 (NKID) contribute to the GTP site. The segment at 601 to 604 (NKID) is G4. The segment at 637–639 (SAK) is G5.

This sequence belongs to the TRAFAC class translation factor GTPase superfamily. Classic translation factor GTPase family. IF-2 subfamily.

Its subcellular location is the cytoplasm. One of the essential components for the initiation of protein synthesis. Protects formylmethionyl-tRNA from spontaneous hydrolysis and promotes its binding to the 30S ribosomal subunits. Also involved in the hydrolysis of GTP during the formation of the 70S ribosomal complex. In Bordetella petrii (strain ATCC BAA-461 / DSM 12804 / CCUG 43448), this protein is Translation initiation factor IF-2.